The chain runs to 123 residues: Large ribosomal subunit protein uL14 (123 aa).

It belongs to the universal ribosomal protein uL14 family. In terms of assembly, part of the 50S ribosomal subunit. Forms a cluster with proteins L3 and L19. In the 70S ribosome, L14 and L19 interact and together make contacts with the 16S rRNA in bridges B5 and B8.

Functionally, binds to 23S rRNA. Forms part of two intersubunit bridges in the 70S ribosome. The polypeptide is Large ribosomal subunit protein uL14 (Vibrio vulnificus (strain CMCP6)).